The chain runs to 200 residues: ATP synthase subunit b (200 aa).

A helical transmembrane segment spans residues 12–32 (ILSGLAVAVAILVPVLALASG).

This sequence belongs to the ATPase B chain family. F-type ATPases have 2 components, F(1) - the catalytic core - and F(0) - the membrane proton channel. F(1) has five subunits: alpha(3), beta(3), gamma(1), delta(1), epsilon(1). F(0) has three main subunits: a(1), b(2) and c(10-14). The alpha and beta chains form an alternating ring which encloses part of the gamma chain. F(1) is attached to F(0) by a central stalk formed by the gamma and epsilon chains, while a peripheral stalk is formed by the delta and b chains.

It localises to the cell inner membrane. F(1)F(0) ATP synthase produces ATP from ADP in the presence of a proton or sodium gradient. F-type ATPases consist of two structural domains, F(1) containing the extramembraneous catalytic core and F(0) containing the membrane proton channel, linked together by a central stalk and a peripheral stalk. During catalysis, ATP synthesis in the catalytic domain of F(1) is coupled via a rotary mechanism of the central stalk subunits to proton translocation. Its function is as follows. Component of the F(0) channel, it forms part of the peripheral stalk, linking F(1) to F(0). This chain is ATP synthase subunit b, found in Trichlorobacter lovleyi (strain ATCC BAA-1151 / DSM 17278 / SZ) (Geobacter lovleyi).